The chain runs to 103 residues: Small ribosomal subunit protein uS10 (103 aa).

This sequence belongs to the universal ribosomal protein uS10 family. As to quaternary structure, part of the 30S ribosomal subunit.

Its function is as follows. Involved in the binding of tRNA to the ribosomes. The polypeptide is Small ribosomal subunit protein uS10 (Chlorobium limicola (strain DSM 245 / NBRC 103803 / 6330)).